Reading from the N-terminus, the 260-residue chain is WUSCHEL-related homeobox 2 (260 aa).

A DNA-binding region (homeobox; WUS-type) is located at residues 10–74; that stretch reads ASSSRWNPTK…NHKARQRQKQ (65 aa).

It belongs to the WUS homeobox family.

It localises to the nucleus. In terms of biological role, probable transcription factor involved in embryonic patterning. Required for apical embryo development after fertilization. Its specific localization to the apical daughter cell of the zygote, while WOX8 is confined to the basal cell, suggests that the asymmetric division of the plant zygote separates determinants of apical and basal cell fates. The chain is WUSCHEL-related homeobox 2 (WOX2) from Arabidopsis thaliana (Mouse-ear cress).